Here is a 901-residue protein sequence, read N- to C-terminus: HTH-type transcriptional regulator MalT (901 aa).

Serine 39–threonine 46 lines the ATP pocket. An HTH luxR-type domain is found at glutamate 829–leucine 894. The segment at residues asparagine 853 to arginine 872 is a DNA-binding region (H-T-H motif).

It belongs to the MalT family. As to quaternary structure, monomer in solution. Oligomerizes to an active state in the presence of the positive effectors ATP and maltotriose.

Activated by ATP and maltotriose, which are both required for DNA binding. Functionally, positively regulates the transcription of the maltose regulon whose gene products are responsible for uptake and catabolism of malto-oligosaccharides. Specifically binds to the promoter region of its target genes, recognizing a short DNA motif called the MalT box. This chain is HTH-type transcriptional regulator MalT, found in Escherichia coli O6:K15:H31 (strain 536 / UPEC).